We begin with the raw amino-acid sequence, 539 residues long: Putative cysteine ligase BshC (539 aa).

ADP contacts are provided by residues Ser146 and 384–386; that span reads ERH. The stretch at 455-475 forms a coiled coil; sequence LLKNAAFIQDQLQFLERTVMK. ADP contacts are provided by residues 490-493, Trp506, and Tyr510; that span reads RIQN.

This sequence belongs to the BshC family. Homodimer in solution.

In terms of biological role, involved in bacillithiol (BSH) biosynthesis. May catalyze the last step of the pathway, the addition of cysteine to glucosamine malate (GlcN-Mal) to generate BSH. This Bacillus subtilis (strain 168) protein is Putative cysteine ligase BshC.